Here is a 300-residue protein sequence, read N- to C-terminus: 7-methylguanosine phosphate-specific 5'-nucleotidase (300 aa).

D41 acts as the Nucleophile in catalysis. 2 residues coordinate Mg(2+): D41 and D43. D43 (proton donor) is an active-site residue. Residue E88 participates in CMP binding. E88 is a N(7)-methyl-GMP binding site. Residues 156–157 (SA) and K205 contribute to the substrate site. D230 is a Mg(2+) binding site. K256 carries the post-translational modification N6-acetyllysine.

The protein belongs to the pyrimidine 5'-nucleotidase family. In terms of assembly, monomer.

Its subcellular location is the cytoplasm. The catalysed reaction is N(7)-methyl-GMP + H2O = N(7)-methylguanosine + phosphate. The enzyme catalyses CMP + H2O = cytidine + phosphate. It carries out the reaction a ribonucleoside 5'-phosphate + H2O = a ribonucleoside + phosphate. Functionally, specifically hydrolyzes 7-methylguanosine monophosphate (m(7)GMP) to 7-methylguanosine and inorganic phosphate. The specific activity for m(7)GMP may protect cells against undesired salvage of m(7)GMP and its incorporation into nucleic acids. Also has weak activity for CMP. UMP and purine nucleotides are poor substrates. The sequence is that of 7-methylguanosine phosphate-specific 5'-nucleotidase (Nt5c3b) from Mus musculus (Mouse).